A 701-amino-acid chain; its full sequence is Elongation factor G (701 aa).

Positions 8-291 constitute a tr-type G domain; it reads SRYRNIGIVA…AVIDYLPAPI (284 aa). GTP contacts are provided by residues 17–24, 89–93, and 143–146; these read AHVDAGKT, DTPGH, and NKMD.

It belongs to the TRAFAC class translation factor GTPase superfamily. Classic translation factor GTPase family. EF-G/EF-2 subfamily.

The protein localises to the cytoplasm. In terms of biological role, catalyzes the GTP-dependent ribosomal translocation step during translation elongation. During this step, the ribosome changes from the pre-translocational (PRE) to the post-translocational (POST) state as the newly formed A-site-bound peptidyl-tRNA and P-site-bound deacylated tRNA move to the P and E sites, respectively. Catalyzes the coordinated movement of the two tRNA molecules, the mRNA and conformational changes in the ribosome. The sequence is that of Elongation factor G from Pseudomonas syringae pv. tomato (strain ATCC BAA-871 / DC3000).